The following is a 372-amino-acid chain: NAD(P)H-quinone oxidoreductase subunit 1 (372 aa).

The next 8 membrane-spanning stretches (helical) occupy residues 27-47, 97-117, 128-148, 176-196, 204-224, 266-286, 308-328, and 347-367; these read IIWL…GVLV, ILFT…WLIV, VGIG…GLLM, LALS…IDIV, ILSW…ICAL, ILSA…PIPV, SIGI…AILL, and FLLP…LAFP.

It belongs to the complex I subunit 1 family. As to quaternary structure, NDH-1 is composed of at least 11 different subunits.

It localises to the cellular thylakoid membrane. The catalysed reaction is a plastoquinone + NADH + (n+1) H(+)(in) = a plastoquinol + NAD(+) + n H(+)(out). It catalyses the reaction a plastoquinone + NADPH + (n+1) H(+)(in) = a plastoquinol + NADP(+) + n H(+)(out). NDH-1 shuttles electrons from an unknown electron donor, via FMN and iron-sulfur (Fe-S) centers, to quinones in the respiratory and/or the photosynthetic chain. The immediate electron acceptor for the enzyme in this species is believed to be plastoquinone. Couples the redox reaction to proton translocation, and thus conserves the redox energy in a proton gradient. This chain is NAD(P)H-quinone oxidoreductase subunit 1, found in Prochlorococcus marinus (strain MIT 9215).